A 441-amino-acid chain; its full sequence is Trigger factor (441 aa).

The PPIase FKBP-type domain maps to 161–246 (GDMVTVDFQG…VKDVKERILA (86 aa)).

This sequence belongs to the FKBP-type PPIase family. Tig subfamily.

It localises to the cytoplasm. It carries out the reaction [protein]-peptidylproline (omega=180) = [protein]-peptidylproline (omega=0). Involved in protein export. Acts as a chaperone by maintaining the newly synthesized protein in an open conformation. Functions as a peptidyl-prolyl cis-trans isomerase. The polypeptide is Trigger factor (Desulfotalea psychrophila (strain LSv54 / DSM 12343)).